Consider the following 127-residue polypeptide: Large ribosomal subunit protein bL17 (127 aa).

The protein belongs to the bacterial ribosomal protein bL17 family. In terms of assembly, part of the 50S ribosomal subunit. Contacts protein L32.

The chain is Large ribosomal subunit protein bL17 from Stenotrophomonas maltophilia (strain R551-3).